Here is a 265-residue protein sequence, read N- to C-terminus: MTESREPHVAGSAAPRPEPANGLASGQPSSRARYSRVLLKLGGEMFGGGQVGLDPDVVAQVARQIAEVVRGGVQVAVVIGGGNFFRGAQLQQRGMERTRSDYMGMLGTVMNSLALQDFLEKEGIVTRVQTAITMGQVAEPYLPLRAVRHLEKGRVVIFGAGMGLPYFSTDTTAAQRALEIGAEVVLMAKAVDGVFSADPRQYPEAELITAISHREVIDRGLRVADATAFSLCMDNGMPILVFNLLTNGNIARAVAGEKIGTLVTT.

The tract at residues 1-29 (MTESREPHVAGSAAPRPEPANGLASGQPS) is disordered. ATP is bound at residue 40–43 (KLGG). A UMP-binding site is contributed by G81. Residues G82 and R86 each coordinate ATP. UMP-binding positions include D101 and 162 to 169 (MGLPYFST). ATP-binding residues include F195 and D198.

It belongs to the UMP kinase family. As to quaternary structure, homohexamer.

It localises to the cytoplasm. It catalyses the reaction UMP + ATP = UDP + ADP. It functions in the pathway pyrimidine metabolism; CTP biosynthesis via de novo pathway; UDP from UMP (UMPK route): step 1/1. With respect to regulation, inhibited by UTP. In terms of biological role, catalyzes the reversible phosphorylation of UMP to UDP. This Mycobacterium avium (strain 104) protein is Uridylate kinase.